Here is a 627-residue protein sequence, read N- to C-terminus: 1-deoxy-D-xylulose-5-phosphate synthase (627 aa).

Thiamine diphosphate contacts are provided by residues histidine 80 and 121–123 (GHS). Mg(2+) is bound at residue aspartate 152. Residues 153–154 (GA), asparagine 181, tyrosine 288, and glutamate 370 contribute to the thiamine diphosphate site. Asparagine 181 lines the Mg(2+) pocket.

Belongs to the transketolase family. DXPS subfamily. In terms of assembly, homodimer. The cofactor is Mg(2+). Requires thiamine diphosphate as cofactor.

The enzyme catalyses D-glyceraldehyde 3-phosphate + pyruvate + H(+) = 1-deoxy-D-xylulose 5-phosphate + CO2. It functions in the pathway metabolic intermediate biosynthesis; 1-deoxy-D-xylulose 5-phosphate biosynthesis; 1-deoxy-D-xylulose 5-phosphate from D-glyceraldehyde 3-phosphate and pyruvate: step 1/1. Its function is as follows. Catalyzes the acyloin condensation reaction between C atoms 2 and 3 of pyruvate and glyceraldehyde 3-phosphate to yield 1-deoxy-D-xylulose-5-phosphate (DXP). The chain is 1-deoxy-D-xylulose-5-phosphate synthase from Aliivibrio fischeri (strain MJ11) (Vibrio fischeri).